Reading from the N-terminus, the 277-residue chain is Large ribosomal subunit protein uL2 (277 aa).

Disordered regions lie at residues 32–58 (KSLT…RGGG) and 225–277 (VAMN…RRNK). A compositionally biased stretch (basic residues) spans 258-277 (YKTRKKKRYSDKFIIKRRNK).

Belongs to the universal ribosomal protein uL2 family. Part of the 50S ribosomal subunit. Forms a bridge to the 30S subunit in the 70S ribosome.

In terms of biological role, one of the primary rRNA binding proteins. Required for association of the 30S and 50S subunits to form the 70S ribosome, for tRNA binding and peptide bond formation. It has been suggested to have peptidyltransferase activity; this is somewhat controversial. Makes several contacts with the 16S rRNA in the 70S ribosome. This chain is Large ribosomal subunit protein uL2, found in Borreliella afzelii (strain PKo) (Borrelia afzelii).